The chain runs to 625 residues: Probable potassium transport system protein Kup (625 aa).

Helical transmembrane passes span 10–30, 50–70, 102–122, 142–162, 172–192, 215–235, 250–270, 284–304, 340–360, 369–389, 397–417, and 422–442; these read LAAL…TSPL, LLGV…LKYV, YFPL…DSVI, FDPY…SVQA, FGPI…VNII, FLAF…EALY, WFLV…ALLL, LGAW…IIAS, IYIP…VVGF, AYGI…FFVI, LLLC…LFSA, and LFHG…LMLT.

The protein belongs to the HAK/KUP transporter (TC 2.A.72) family.

The protein resides in the cell inner membrane. The catalysed reaction is K(+)(in) + H(+)(in) = K(+)(out) + H(+)(out). Functionally, transport of potassium into the cell. Likely operates as a K(+):H(+) symporter. The protein is Probable potassium transport system protein Kup of Janthinobacterium sp. (strain Marseille) (Minibacterium massiliensis).